A 760-amino-acid polypeptide reads, in one-letter code: Serine/threonine-protein kinase Haspin homolog ALK1 (760 aa).

Phosphoserine is present on residues Ser-76 and Ser-79. 4 disordered regions span residues 76-100 (SDAS…KKRW), 123-153 (SSFT…SSLD), 187-264 (DDIS…STVS), and 362-408 (KRNS…CSYS). A compositionally biased stretch (polar residues) spans 78 to 95 (ASLNVTTGNNTSRKTTSN). The KEN box motif lies at 200 to 202 (KEN). Over residues 209–220 (KKNSSIASTSSE) the composition is skewed to polar residues. A D box motif is present at residues 224 to 232 (RTPLKPLVN). The segment covering 237 to 250 (PTSQPQQQQPLYNA) has biased composition (polar residues). Residues 251–264 (SLSSRRSSISSTVS) are compositionally biased toward low complexity. Residues 362-386 (KRNSQSSLKHKSSHASLQKFKRNKG) show a composition bias toward basic residues. Over residues 398 to 408 (NSSNDDSCSYS) the composition is skewed to low complexity. Residues 468–760 (NCDIKRILNP…NTGDLLKLYK (293 aa)) form the Protein kinase domain. Residues 474–482 (ILNPAKGDV) and Lys-510 each bind ATP.

Belongs to the protein kinase superfamily. Ser/Thr protein kinase family. Haspin subfamily. In terms of processing, periodically phosphorylated during the cell cycle with a phosphorylation peak during mitosis and hyperphosphorylated after DNA damage.

It catalyses the reaction L-seryl-[protein] + ATP = O-phospho-L-seryl-[protein] + ADP + H(+). The catalysed reaction is L-threonyl-[protein] + ATP = O-phospho-L-threonyl-[protein] + ADP + H(+). In terms of biological role, serine/threonine haspin-like protein kinase involved in cell cycle regulation. The chain is Serine/threonine-protein kinase Haspin homolog ALK1 (ALK1) from Saccharomyces cerevisiae (strain ATCC 204508 / S288c) (Baker's yeast).